Here is a 489-residue protein sequence, read N- to C-terminus: Aspartate/glutamate permease AcaP (489 aa).

12 helical membrane-spanning segments follow: residues 6 to 26 (IRWF…GNVV), 36 to 56 (VVTS…LIVG), 91 to 111 (VVHI…FGWV), 122 to 142 (MSMT…LWLS), 152 to 172 (IGGL…VMAI), 195 to 215 (IPKF…AVGG), 238 to 258 (FLLA…MGMI), 290 to 310 (LMIV…AFSI), 342 to 362 (GYTL…LGIG), 373 to 393 (NLNS…FIML), 413 to 433 (AMIA…LGMV), and 449 to 469 (LASN…LPFI).

This sequence belongs to the amino acid-polyamine-organocation (APC) superfamily. Glutamate:GABA antiporter (GGA) (TC 2.A.3.7) family.

The protein localises to the cell membrane. Involved in aspartate and glutamate uptake. Plays no significant role in the excretion of accumulated glutamate. This chain is Aspartate/glutamate permease AcaP, found in Lactococcus lactis subsp. cremoris (strain MG1363).